A 167-amino-acid polypeptide reads, in one-letter code: Small ribosomal subunit protein uS5 (167 aa).

The region spanning 11-74 (LQEKLIAVNR…EKARRAMINV (64 aa)) is the S5 DRBM domain.

This sequence belongs to the universal ribosomal protein uS5 family. In terms of assembly, part of the 30S ribosomal subunit. Contacts proteins S4 and S8.

Functionally, with S4 and S12 plays an important role in translational accuracy. Located at the back of the 30S subunit body where it stabilizes the conformation of the head with respect to the body. This chain is Small ribosomal subunit protein uS5, found in Yersinia enterocolitica serotype O:8 / biotype 1B (strain NCTC 13174 / 8081).